The following is a 399-amino-acid chain: Zinc finger TRAF-type-containing protein 1 (399 aa).

Residues 1 to 13 (MSGAEEAGGGGPA) show a composition bias toward gly residues. The segment at 1–20 (MSGAEEAGGGGPAAGPAGAV) is disordered. An RING-type; degenerate zinc finger spans residues 106-151 (CTVCLDLPKASVYQCTNGHLMCAGCFIHLLADARLKEEQATCPNCR). The segment at 152–210 (CEISKSLCCRNLAVEKAVSELPSECGFCLRQFPRSLLERHQKEECQDRVTQCKYKRIGC) adopts a TRAF-type zinc-finger fold.

It belongs to the ZFTRAF1 family. As to quaternary structure, interacts with LGALS3.

It localises to the cytoplasm. The protein resides in the perinuclear region. The protein is Zinc finger TRAF-type-containing protein 1 of Rattus norvegicus (Rat).